A 361-amino-acid chain; its full sequence is Chorismate synthase (361 aa).

Residues arginine 48 and arginine 54 each contribute to the NADP(+) site. FMN-binding positions include 125 to 127, 238 to 239, glycine 278, 293 to 297, and arginine 319; these read RSS, NA, and KPTSS.

It belongs to the chorismate synthase family. As to quaternary structure, homotetramer. It depends on FMNH2 as a cofactor.

It carries out the reaction 5-O-(1-carboxyvinyl)-3-phosphoshikimate = chorismate + phosphate. The protein operates within metabolic intermediate biosynthesis; chorismate biosynthesis; chorismate from D-erythrose 4-phosphate and phosphoenolpyruvate: step 7/7. Functionally, catalyzes the anti-1,4-elimination of the C-3 phosphate and the C-6 proR hydrogen from 5-enolpyruvylshikimate-3-phosphate (EPSP) to yield chorismate, which is the branch point compound that serves as the starting substrate for the three terminal pathways of aromatic amino acid biosynthesis. This reaction introduces a second double bond into the aromatic ring system. The polypeptide is Chorismate synthase (Salmonella dublin (strain CT_02021853)).